A 622-amino-acid chain; its full sequence is Sodium/potassium/calcium exchanger 4 (622 aa).

An N-terminal signal peptide occupies residues 1-38 (MALRGTLRPLKVRRRREMLPQQVGFVCAVLALVCCASG). Topologically, residues 39–97 (LFGSLGHKTASASKRVLPDTWRNRKLMAPVNGTQTAKNCTDPAIHEFPTDLFSNKERQH) are extracellular. 2 N-linked (GlcNAc...) asparagine glycosylation sites follow: asparagine 69 and asparagine 76. A helical transmembrane segment spans residues 98–118 (GAVLLHILGALYMFYALAIVC). The Cytoplasmic segment spans residues 119-142 (DDFFVPSLEKICERLHLSEDVAGA). The stretch at 139-179 (VAGATFMAAGSSTPELFASVIGVFITHGDVGVGTIVGSAVF) is one Alpha-1 repeat. The chain crosses the membrane as a helical span at residues 143 to 163 (TFMAAGSSTPELFASVIGVFI). Topologically, residues 164-172 (THGDVGVGT) are extracellular. A helical membrane pass occupies residues 173–193 (IVGSAVFNILCIIGVCGLFAG). The Cytoplasmic portion of the chain corresponds to 194 to 200 (QVVRLTW). A helical transmembrane segment spans residues 201-221 (WAVCRDSVYYTISVIVLIVFI). Topologically, residues 222-224 (YDE) are extracellular. Residues 225-245 (QIVWWEGLVLIILYVFYILIM) form a helical membrane-spanning segment. Topologically, residues 246-457 (KYNVKMQAFF…RWEKFFMVTF (212 aa)) are cytoplasmic. Positions 358–410 (ANGVSSKPLQNGRHENIENGNVPVENPEDPQQNQEQQPPPQPPPPEPEPVEAD) are disordered. The span at 380-393 (PVENPEDPQQNQEQ) shows a compositional bias: low complexity. Over residues 394–404 (QPPPQPPPPEP) the composition is skewed to pro residues. The chain crosses the membrane as a helical span at residues 458–478 (ITATLWIAVFSYIMVWLVTII). Glycine 479 is a topological domain (extracellular). The chain crosses the membrane as a helical span at residues 480 to 500 (YTLGIPDVIMGITFLAAGTSV). One copy of the Alpha-2 repeat lies at 495-526 (AAGTSVPDCMASLIVARQGLGDMAVSNTIGSN). The Cytoplasmic segment spans residues 501–526 (PDCMASLIVARQGLGDMAVSNTIGSN). The helical transmembrane segment at 527 to 547 (VFDILVGLGVPWGLQTMVVNY) threads the bilayer. Residues 548-557 (GSTVKINSRG) are Extracellular-facing. The helical transmembrane segment at 558-578 (LVYSVVLLLGSVALTVLGIHL) threads the bilayer. At 579–586 (NKWRLDRK) the chain is on the cytoplasmic side. The chain crosses the membrane as a helical span at residues 587 to 607 (LGVYVLVLYAIFLCFSIMIEF). At 608–622 (NVFTFVNLPMCREDD) the chain is on the extracellular side.

Belongs to the Ca(2+):cation antiporter (CaCA) (TC 2.A.19) family. SLC24A subfamily. Expressed abundantly in all regions of the brain, aorta, lung and thymus. Expressed at lower levels in the stomach and intestine.

It is found in the cell membrane. It localises to the cytoplasm. The catalysed reaction is Ca(2+)(out) + K(+)(out) + 4 Na(+)(in) = Ca(2+)(in) + K(+)(in) + 4 Na(+)(out). Its function is as follows. Calcium, potassium:sodium antiporter that transports 1 Ca(2+) and 1 K(+) in exchange for 4 Na(+). Controls the rapid response termination and proper regulation of adaptation in olfactory sensory neurons (OSNs) which subsequently influences how odor information is encoded and perceived. May play a role in calcium transport during amelogenesis. This chain is Sodium/potassium/calcium exchanger 4, found in Homo sapiens (Human).